A 203-amino-acid polypeptide reads, in one-letter code: WUSCHEL-related homeobox 3 (203 aa).

A DNA-binding region (homeobox; WUS-type) is located at residues 4 to 68 (TPSTRWCPTP…NHKARERQRL (65 aa)). Disordered stretches follow at residues 73–95 (CARHQQQPSPPSSTVPPAPTAAA), 109–135 (LHHHHHHHHPYAAAAAAQSHHLQQQQQ), and 180–203 (STSGGLKEDCCSSSKSSSCSTSTN). Over residues 80–91 (PSPPSSTVPPAP) the composition is skewed to pro residues. A compositionally biased stretch (basic residues) spans 109-118 (LHHHHHHHHP). Low complexity-rich tracts occupy residues 119–135 (YAAAAAAQSHHLQQQQQ) and 190–203 (CSSSKSSSCSTSTN).

Belongs to the WUS homeobox family.

It localises to the nucleus. Its function is as follows. Transcription factor which may be involved in developmental processes. This chain is WUSCHEL-related homeobox 3 (WOX3), found in Oryza sativa subsp. indica (Rice).